A 149-amino-acid polypeptide reads, in one-letter code: Cytochrome c oxidase subunit 5A, mitochondrial (149 aa).

It belongs to the cytochrome c oxidase subunit 5A family. Component of the cytochrome c oxidase (complex IV, CIV), a multisubunit enzyme composed of a catalytic core of 3 subunits and several supernumerary subunits. The complex exists as a monomer or a dimer and forms supercomplexes (SCs) in the inner mitochondrial membrane with ubiquinol-cytochrome c oxidoreductase (cytochrome b-c1 complex, complex III, CIII).

The protein resides in the mitochondrion inner membrane. It functions in the pathway energy metabolism; oxidative phosphorylation. Component of the cytochrome c oxidase, the last enzyme in the mitochondrial electron transport chain which drives oxidative phosphorylation. The respiratory chain contains 3 multisubunit complexes succinate dehydrogenase (complex II, CII), ubiquinol-cytochrome c oxidoreductase (cytochrome b-c1 complex, complex III, CIII) and cytochrome c oxidase (complex IV, CIV), that cooperate to transfer electrons derived from NADH and succinate to molecular oxygen, creating an electrochemical gradient over the inner membrane that drives transmembrane transport and the ATP synthase. Cytochrome c oxidase is the component of the respiratory chain that catalyzes the reduction of oxygen to water. Electrons originating from reduced cytochrome c in the intermembrane space (IMS) are transferred via the dinuclear copper A center (CU(A)) of subunit 2 and heme A of subunit 1 to the active site in subunit 1, a binuclear center (BNC) formed by heme A3 and copper B (CU(B)). The BNC reduces molecular oxygen to 2 water molecules using 4 electrons from cytochrome c in the IMS and 4 protons from the mitochondrial matrix. The chain is Cytochrome c oxidase subunit 5A, mitochondrial from Drosophila melanogaster (Fruit fly).